Reading from the N-terminus, the 181-residue chain is U1 small nuclear ribonucleoprotein C (181 aa).

The Matrin-type zinc-finger motif lies at 2–34 (PKCDYCDVYLTHDSMSVRKAHNSGRNHLRNVVD). 2 stretches are compositionally biased toward pro residues: residues 129-143 (PGMP…PGGL) and 150-174 (PIPP…PPPG). The disordered stretch occupies residues 129–181 (PGMPAGMPFPPPGGLPPNFQFPIPPPGGFPGMPPPGQGFPGMPPPGGNHDERR).

It belongs to the U1 small nuclear ribonucleoprotein C family. U1 snRNP is composed of the 7 core Sm proteins B/B', D1, D2, D3, E, F and G that assemble in a heptameric protein ring on the Sm site of the small nuclear RNA to form the core snRNP, and at least 3 U1 snRNP-specific proteins U1-70K, U1-A and U1-C. U1-C interacts with U1 snRNA and the 5' splice-site region of the pre-mRNA.

The protein localises to the nucleus. Functionally, component of the spliceosomal U1 snRNP, which is essential for recognition of the pre-mRNA 5' splice-site and the subsequent assembly of the spliceosome. U1-C is directly involved in initial 5' splice-site recognition for both constitutive and regulated alternative splicing. The interaction with the 5' splice-site seems to precede base-pairing between the pre-mRNA and the U1 snRNA. Stimulates commitment or early (E) complex formation by stabilizing the base pairing of the 5' end of the U1 snRNA and the 5' splice-site region. This is U1 small nuclear ribonucleoprotein C from Sclerotinia sclerotiorum (strain ATCC 18683 / 1980 / Ss-1) (White mold).